We begin with the raw amino-acid sequence, 367 residues long: Flagellar P-ring protein (367 aa).

An N-terminal signal peptide occupies residues 1-24; the sequence is MLRPIITLLCLTLMLCTAAGPAGA.

The protein belongs to the FlgI family. The basal body constitutes a major portion of the flagellar organelle and consists of four rings (L,P,S, and M) mounted on a central rod.

The protein resides in the periplasm. The protein localises to the bacterial flagellum basal body. Its function is as follows. Assembles around the rod to form the L-ring and probably protects the motor/basal body from shearing forces during rotation. The polypeptide is Flagellar P-ring protein (Syntrophotalea carbinolica (strain DSM 2380 / NBRC 103641 / GraBd1) (Pelobacter carbinolicus)).